Reading from the N-terminus, the 124-residue chain is Small ribosomal subunit protein uS12 (124 aa).

Residues M1–Q29 are disordered. D90 is modified (3-methylthioaspartic acid).

This sequence belongs to the universal ribosomal protein uS12 family. In terms of assembly, part of the 30S ribosomal subunit. Contacts proteins S8 and S17. May interact with IF1 in the 30S initiation complex.

Functionally, with S4 and S5 plays an important role in translational accuracy. Interacts with and stabilizes bases of the 16S rRNA that are involved in tRNA selection in the A site and with the mRNA backbone. Located at the interface of the 30S and 50S subunits, it traverses the body of the 30S subunit contacting proteins on the other side and probably holding the rRNA structure together. The combined cluster of proteins S8, S12 and S17 appears to hold together the shoulder and platform of the 30S subunit. This Anaplasma marginale (strain Florida) protein is Small ribosomal subunit protein uS12.